Here is a 375-residue protein sequence, read N- to C-terminus: Methylthioribose-1-phosphate isomerase (375 aa).

Asp257 serves as the catalytic Proton donor.

The protein belongs to the eIF-2B alpha/beta/delta subunits family. MtnA subfamily.

It is found in the cytoplasm. The protein localises to the nucleus. It carries out the reaction 5-(methylsulfanyl)-alpha-D-ribose 1-phosphate = 5-(methylsulfanyl)-D-ribulose 1-phosphate. It functions in the pathway amino-acid biosynthesis; L-methionine biosynthesis via salvage pathway; L-methionine from S-methyl-5-thio-alpha-D-ribose 1-phosphate: step 1/6. Catalyzes the interconversion of methylthioribose-1-phosphate (MTR-1-P) into methylthioribulose-1-phosphate (MTRu-1-P). In Leishmania major, this protein is Methylthioribose-1-phosphate isomerase.